The chain runs to 2179 residues: Genome polyprotein (2179 aa).

Disordered regions lie at residues 503-531, 623-678, 703-738, and 753-847; these read FSKD…PTGD, QPQK…YPIQ, RAKK…GDQF, and EPSV…PPKM. 2 stretches are compositionally biased toward polar residues: residues 630 to 642 and 659 to 678; these read DTPS…QPFH and TTFA…YPIQ. A compositionally biased stretch (polar residues) spans 758–770; the sequence is SEDTSSQSYISTE. Positions 783–806 are enriched in low complexity; the sequence is SEESTQLSQLSSSSNDSPENNENT. Residues 819 to 831 show a composition bias toward acidic residues; that stretch reads EISEVEDEVDGMT. The CCHC-type zinc finger occupies 1112-1125; that stretch reads CFTCGKIGHFSRNC. The active-site For protease activity; shared with dimeric partner is aspartate 1226. Positions 1409–1591 constitute a Reverse transcriptase domain; the sequence is QQFDLIEPSD…NKIQFLGMDF (183 aa). The Mg(2+) site is built by aspartate 1479, aspartate 1542, and aspartate 1543. Disordered regions lie at residues 1822-1848, 2114-2144, and 2160-2179; these read QRRT…KLSH, NIVK…KNKC, and YSTK…EPCV. A compositionally biased stretch (low complexity) spans 1827–1840; that stretch reads SSSTKSKADSSQST. The span at 2120–2144 shows a compositional bias: basic residues; sequence PRKRKGKAKSRSSTRSEKRRAKNKC. The span at 2162–2179 shows a compositional bias: polar residues; sequence TKPSTPSWTQDSSSEPCV.

The protein belongs to the Petuviruses genome polyprotein family.

The catalysed reaction is DNA(n) + a 2'-deoxyribonucleoside 5'-triphosphate = DNA(n+1) + diphosphate. Functionally, encodes presumably for at least four polypeptides: Movement protein (MP), capsid protein (CP), Protease (PR), and reverse transcriptase (RT). This is Genome polyprotein from Petunia vein clearing virus (isolate Shepherd) (PVCV).